Here is a 442-residue protein sequence, read N- to C-terminus: tRNA modification GTPase MnmE (442 aa).

(6S)-5-formyl-5,6,7,8-tetrahydrofolate-binding residues include Arg24, Glu82, and Lys120. A TrmE-type G domain is found at 217–367 (GLHIVITGEP…LVSVIKEKVE (151 aa)). GTP is bound by residues 227–232 (NVGKST), 246–252 (SEYVGTT), and 271–274 (DTAG). Residues Ser231 and Thr252 each contribute to the Mg(2+) site. Lys442 provides a ligand contact to (6S)-5-formyl-5,6,7,8-tetrahydrofolate.

This sequence belongs to the TRAFAC class TrmE-Era-EngA-EngB-Septin-like GTPase superfamily. TrmE GTPase family. Homodimer. Heterotetramer of two MnmE and two MnmG subunits. K(+) serves as cofactor.

It is found in the cytoplasm. Functionally, exhibits a very high intrinsic GTPase hydrolysis rate. Involved in the addition of a carboxymethylaminomethyl (cmnm) group at the wobble position (U34) of certain tRNAs, forming tRNA-cmnm(5)s(2)U34. The sequence is that of tRNA modification GTPase MnmE from Wolbachia sp. subsp. Brugia malayi (strain TRS).